We begin with the raw amino-acid sequence, 432 residues long: Glutamate-1-semialdehyde 2,1-aminomutase (432 aa).

At lysine 272 the chain carries N6-(pyridoxal phosphate)lysine.

This sequence belongs to the class-III pyridoxal-phosphate-dependent aminotransferase family. HemL subfamily. In terms of assembly, homodimer. Pyridoxal 5'-phosphate is required as a cofactor.

It is found in the cytoplasm. The catalysed reaction is (S)-4-amino-5-oxopentanoate = 5-aminolevulinate. It functions in the pathway porphyrin-containing compound metabolism; protoporphyrin-IX biosynthesis; 5-aminolevulinate from L-glutamyl-tRNA(Glu): step 2/2. Its pathway is porphyrin-containing compound metabolism; chlorophyll biosynthesis. This chain is Glutamate-1-semialdehyde 2,1-aminomutase, found in Acaryochloris marina (strain MBIC 11017).